A 319-amino-acid polypeptide reads, in one-letter code: Mitochondrial thiamine pyrophosphate carrier 1 (319 aa).

3 Solcar repeats span residues 12–110, 121–207, and 214–309; these read GQRY…VTQS, PQPA…VRVP, and PFGS…VLKI. Helical transmembrane passes span 17-35, 91-107, 127-147, 182-201, 221-237, and 284-301; these read VVAA…VAPL, LLYI…YRTV, FVSG…FDLL, GVSA…FATY, TAGV…VFPL, and GLTV…VTMW.

The protein belongs to the mitochondrial carrier (TC 2.A.29) family.

The protein resides in the mitochondrion inner membrane. Mitochondrial transporter that mediates uptake of thiamine pyrophosphate (ThPP) into mitochondria. The chain is Mitochondrial thiamine pyrophosphate carrier 1 (TPC1) from Coccidioides immitis (strain RS) (Valley fever fungus).